The following is a 491-amino-acid chain: Cobyric acid synthase (491 aa).

The GATase cobBQ-type domain occupies 253–429 (ARRVAVIRLP…WHGALEGDEL (177 aa)). Cys-334 serves as the catalytic Nucleophile. Residue His-421 is part of the active site.

Belongs to the CobB/CobQ family. CobQ subfamily.

It participates in cofactor biosynthesis; adenosylcobalamin biosynthesis. Functionally, catalyzes amidations at positions B, D, E, and G on adenosylcobyrinic A,C-diamide. NH(2) groups are provided by glutamine, and one molecule of ATP is hydrogenolyzed for each amidation. This is Cobyric acid synthase from Mycolicibacterium gilvum (strain PYR-GCK) (Mycobacterium gilvum (strain PYR-GCK)).